The sequence spans 323 residues: MADKQISLPAKLINGGIAGLIGVTCVFPIDLAKTRLQNQQNGQRMYASMSDCLIKTIRSEGYFGMYRGAAVNLTLVTPEKAIKLAANDFFRHQLSKDGQKLTLPKEMLAGCGAGTCQVIVTTPMEMLKIQLQDAGRIAAQRKILAAQAQLSAQGGAQPSVEAPAPPRPTATQLTRDLLRNHGIAGLYKGLGATLLRDVPFSIVYFPLFANLNQLGRPSSEEKSPFYVSFLAGCVAGSAAAVAVNPCDVVKTRLQSLERGVNEDTYSGFLDCARKIWRHEGPSAFLKGAYCRALVIAPLFGIAQVVYFLGIAESLLGLLQEPQA.

Solcar repeat units lie at residues 6–93 (ISLP…FRHQ), 101–214 (LTLP…LNQL), and 223–312 (SPFY…GIAE). 6 helical membrane-spanning segments follow: residues 12–32 (LING…IDLA), 62–82 (YFGM…EKAI), 107–127 (MLAG…MEML), 189–209 (GLGA…PLFA), 223–243 (SPFY…AVAV), and 292–312 (ALVI…GIAE).

It belongs to the mitochondrial carrier (TC 2.A.29) family.

It is found in the mitochondrion inner membrane. The catalysed reaction is L-glutamate(in) + H(+)(in) = L-glutamate(out) + H(+)(out). Functionally, mitochondrial glutamate/H(+) symporter. Responsible for the transport of glutamate from the cytosol into the mitochondrial matrix with the concomitant import of a proton. Plays a role in the control of glucose-stimulated insulin secretion. The sequence is that of Mitochondrial glutamate carrier 1 (Slc25a22) from Mus musculus (Mouse).